The chain runs to 119 residues: Basic phospholipase A2 DE-1 (119 aa).

Disulfide bonds link C11-C71, C26-C118, C28-C44, C43-C99, C50-C92, C60-C85, and C78-C90. The Ca(2+) site is built by Y27, G29, G31, and D48. Residue D93 is part of the active site.

It belongs to the phospholipase A2 family. Group I subfamily. D49 sub-subfamily. The cofactor is Ca(2+). As to expression, expressed by the venom gland.

It is found in the secreted. It catalyses the reaction a 1,2-diacyl-sn-glycero-3-phosphocholine + H2O = a 1-acyl-sn-glycero-3-phosphocholine + a fatty acid + H(+). In terms of biological role, PLA2 catalyzes the calcium-dependent hydrolysis of the 2-acyl groups in 3-sn-phosphoglycerides. The chain is Basic phospholipase A2 DE-1 from Hemachatus haemachatus (Rinkhals).